Reading from the N-terminus, the 189-residue chain is Urease accessory protein UreF (189 aa).

The protein belongs to the UreF family. UreD, UreF and UreG form a complex that acts as a GTP-hydrolysis-dependent molecular chaperone, activating the urease apoprotein by helping to assemble the nickel containing metallocenter of UreC. The UreE protein probably delivers the nickel.

The protein resides in the cytoplasm. In terms of biological role, required for maturation of urease via the functional incorporation of the urease nickel metallocenter. The polypeptide is Urease accessory protein UreF (Staphylococcus xylosus).